We begin with the raw amino-acid sequence, 369 residues long: Flagellar P-ring protein (369 aa).

Residues 1–23 (MIKQFAVSLLLVLLTLVTTTASA) form the signal peptide.

It belongs to the FlgI family. As to quaternary structure, the basal body constitutes a major portion of the flagellar organelle and consists of four rings (L,P,S, and M) mounted on a central rod.

The protein resides in the periplasm. The protein localises to the bacterial flagellum basal body. Assembles around the rod to form the L-ring and probably protects the motor/basal body from shearing forces during rotation. This Photorhabdus laumondii subsp. laumondii (strain DSM 15139 / CIP 105565 / TT01) (Photorhabdus luminescens subsp. laumondii) protein is Flagellar P-ring protein.